The chain runs to 153 residues: Small ribosomal subunit protein bS6 (153 aa).

The tract at residues 94-153 is disordered; the sequence is EAHEEGPSAMMQKRDRDDRPRRDGDRPDRGDRGDRGDRGPREGGRESFGDRPRRPREDRA.

This sequence belongs to the bacterial ribosomal protein bS6 family.

In terms of biological role, binds together with bS18 to 16S ribosomal RNA. The chain is Small ribosomal subunit protein bS6 from Allorhizobium ampelinum (strain ATCC BAA-846 / DSM 112012 / S4) (Agrobacterium vitis (strain S4)).